The following is a 433-amino-acid chain: Signal recognition particle 54 kDa protein (433 aa).

GTP is bound by residues 106-113 (GVEGSGKT), 186-190 (DTAGR), and 244-247 (TKMD).

Belongs to the GTP-binding SRP family. SRP54 subfamily. As to quaternary structure, part of the signal recognition particle protein translocation system, which is composed of SRP and FtsY. Archaeal SRP consists of a 7S RNA molecule of 300 nucleotides and two protein subunits: SRP54 and SRP19.

The protein resides in the cytoplasm. The catalysed reaction is GTP + H2O = GDP + phosphate + H(+). In terms of biological role, involved in targeting and insertion of nascent membrane proteins into the cytoplasmic membrane. Binds to the hydrophobic signal sequence of the ribosome-nascent chain (RNC) as it emerges from the ribosomes. The SRP-RNC complex is then targeted to the cytoplasmic membrane where it interacts with the SRP receptor FtsY. The polypeptide is Signal recognition particle 54 kDa protein (Pyrobaculum arsenaticum (strain DSM 13514 / JCM 11321 / PZ6)).